Reading from the N-terminus, the 152-residue chain is ARL14 effector protein-like (152 aa).

The segment at 1–21 (MNEQSEKNNSIQERHTDHSFP) is disordered.

This is ARL14 effector protein-like (ARL14EPL) from Homo sapiens (Human).